Reading from the N-terminus, the 765-residue chain is Leucine-rich repeat and calponin homology domain-containing protein 2 (765 aa).

Disordered regions lie at residues 1-39 and 55-76; these read MAAS…GGGG and LFGQ…PQHT. LRR repeat units lie at residues 89–110, 112–133, 135–156, 158–179, 180–201, 203–224, 226–248, 249–269, and 271–292; these read SSGI…GYDL, DTTQ…VWLF, PLET…IKNL, MLTY…LFDL, PLKV…IGKL, DLME…MGKL, SLRE…GDLP, LVKL…YRKL, and HLQV…ICLK. The segment at 316-401 is disordered; it reads LDLPSLSKRM…GSKTDSQKDQ (86 aa). The span at 378–388 shows a compositional bias: basic and acidic residues; the sequence is SNREQTSRNDS. The stretch at 438-472 forms a coiled coil; the sequence is SEKSRKNEELGDEKRLEKEQLLAEEEDDDLKEVTD. 2 disordered regions span residues 498–552 and 565–628; these read RNKP…QSEE and KYKS…EYGA. Residues 503 to 512 are compositionally biased toward basic and acidic residues; it reads QTVECEKSVS. 2 stretches are compositionally biased toward polar residues: residues 518–529 and 584–595; these read SPLSPLTWQPLE and DNANMSTQSPVS. One can recognise a Calponin-homology (CH) domain in the interval 642–755; the sequence is LREEREQIRQ…VTVQALLELP (114 aa).

In terms of biological role, may play a role in the organization of the cytoskeleton. The sequence is that of Leucine-rich repeat and calponin homology domain-containing protein 2 (LRCH2) from Homo sapiens (Human).